We begin with the raw amino-acid sequence, 102 residues long: ATP-dependent Clp protease adapter protein ClpS (102 aa).

This sequence belongs to the ClpS family. In terms of assembly, binds to the N-terminal domain of the chaperone ClpA.

Involved in the modulation of the specificity of the ClpAP-mediated ATP-dependent protein degradation. This is ATP-dependent Clp protease adapter protein ClpS from Shewanella pealeana (strain ATCC 700345 / ANG-SQ1).